Here is a 223-residue protein sequence, read N- to C-terminus: Adenylate kinase 4, mitochondrial (223 aa).

15 to 20 lines the a ribonucleoside 5'-triphosphate pocket; the sequence is GSGKGT. The segment at 35–64 is NMP; it reads SSGHFLRENIKASTEVGEMAKQYIEKSLLV. Positions 36 and 41 each coordinate AMP. N6-succinyllysine is present on Lys-60. AMP is bound by residues 62–64, 89–92, and Gln-96; these read LLV and GFPR. The LID stretch occupies residues 125-162; that stretch reads RRWIHPPSGRVYNLDFNPPHVHGIDDVTGEPLVQQEDD. A ribonucleoside 5'-triphosphate-binding positions include Arg-126 and 135–136; that span reads VY. Arg-170 provides a ligand contact to AMP. The residue at position 175 (Lys-175) is an N6-acetyllysine. 2 positions are modified to N6-acetyllysine; alternate: Lys-179 and Lys-186. Lys-179 and Lys-186 each carry N6-succinyllysine; alternate. Thr-199 contacts a ribonucleoside 5'-triphosphate.

This sequence belongs to the adenylate kinase family. AK3 subfamily. As to quaternary structure, monomer. Interacts with SLC25A5/ANT2. As to expression, highly expressed in kidney, moderately expressed in heart and liver and weakly expressed in brain.

It localises to the mitochondrion matrix. The enzyme catalyses a ribonucleoside 5'-phosphate + ATP = a ribonucleoside 5'-diphosphate + ADP. It carries out the reaction AMP + ATP = 2 ADP. It catalyses the reaction GTP + AMP = GDP + ADP. The catalysed reaction is CMP + ATP = CDP + ADP. The enzyme catalyses GTP + CMP = CDP + GDP. It carries out the reaction dAMP + ATP = dADP + ADP. It catalyses the reaction dCMP + ATP = dCDP + ADP. The catalysed reaction is a 2'-deoxyribonucleoside 5'-diphosphate + ATP = a 2'-deoxyribonucleoside 5'-triphosphate + ADP. The enzyme catalyses a ribonucleoside 5'-diphosphate + ATP = a ribonucleoside 5'-triphosphate + ADP. It carries out the reaction GDP + ATP = GTP + ADP. It catalyses the reaction CDP + GTP = CTP + GDP. The catalysed reaction is CDP + ATP = CTP + ADP. The enzyme catalyses UDP + ATP = UTP + ADP. It carries out the reaction GTP + UDP = UTP + GDP. It catalyses the reaction dADP + GTP = dATP + GDP. The catalysed reaction is dCDP + GTP = dCTP + GDP. The enzyme catalyses dCDP + ATP = dCTP + ADP. It carries out the reaction dGDP + ATP = dGTP + ADP. It catalyses the reaction dTDP + GTP = dTTP + GDP. The catalysed reaction is dTDP + ATP = dTTP + ADP. Broad-specificity mitochondrial nucleoside phosphate kinase involved in cellular nucleotide homeostasis by catalyzing nucleoside-phosphate interconversions. Similar to other adenylate kinases, preferentially catalyzes the phosphorylation of the nucleoside monophosphate AMP with ATP as phosphate donor to produce ADP. Phosphorylates only AMP when using GTP as phosphate donor. In vitro, can also catalyze the phosphorylation of CMP, dAMP and dCMP and use GTP as an alternate phosphate donor. Moreover, exhibits a diphosphate kinase activity, producing ATP, CTP, GTP, UTP, TTP, dATP, dCTP and dGTP from the corresponding diphosphate substrates with either ATP or GTP as phosphate donors. Plays a role in controlling cellular ATP levels by regulating phosphorylation and activation of the energy sensor protein kinase AMPK. Plays a protective role in the cellular response to oxidative stress. In Homo sapiens (Human), this protein is Adenylate kinase 4, mitochondrial.